We begin with the raw amino-acid sequence, 715 residues long: Fatty acid oxidation complex subunit alpha (715 aa).

Residues 1-190 (MTTTSAFMLS…KAGLVDDVVP (190 aa)) are enoyl-CoA hydratase. A 3-hydroxyacyl-CoA dehydrogenase region spans residues 306 to 714 (GPLNSVGILG…FWTNGETDQG (409 aa)).

In the N-terminal section; belongs to the enoyl-CoA hydratase/isomerase family. This sequence in the central section; belongs to the 3-hydroxyacyl-CoA dehydrogenase family. In terms of assembly, heterotetramer of two alpha chains (FadJ) and two beta chains (FadI).

The protein resides in the cytoplasm. The enzyme catalyses a (3S)-3-hydroxyacyl-CoA = a (2E)-enoyl-CoA + H2O. It catalyses the reaction a 4-saturated-(3S)-3-hydroxyacyl-CoA = a (3E)-enoyl-CoA + H2O. It carries out the reaction a (3S)-3-hydroxyacyl-CoA + NAD(+) = a 3-oxoacyl-CoA + NADH + H(+). The catalysed reaction is (3S)-3-hydroxybutanoyl-CoA = (3R)-3-hydroxybutanoyl-CoA. It functions in the pathway lipid metabolism; fatty acid beta-oxidation. In terms of biological role, catalyzes the formation of a hydroxyacyl-CoA by addition of water on enoyl-CoA. Also exhibits 3-hydroxyacyl-CoA epimerase and 3-hydroxyacyl-CoA dehydrogenase activities. The polypeptide is Fatty acid oxidation complex subunit alpha (Salmonella typhi).